A 185-amino-acid polypeptide reads, in one-letter code: Ribosome-recycling factor (185 aa).

Belongs to the RRF family.

The protein resides in the cytoplasm. Functionally, responsible for the release of ribosomes from messenger RNA at the termination of protein biosynthesis. May increase the efficiency of translation by recycling ribosomes from one round of translation to another. This Ehrlichia ruminantium (strain Gardel) protein is Ribosome-recycling factor.